Consider the following 317-residue polypeptide: NADH-ubiquinone oxidoreductase chain 1 (317 aa).

The next 9 helical transmembrane spans lie at 3-23, 37-57, 69-89, 103-123, 141-161, 173-193, 207-227, 247-267, and 282-302; these read YIEL…LTVA, PNAV…KLLL, LILF…WSVI, GFIL…LAGW, LISY…IGGT, AIWY…GCVA, SELV…LFFL, GGTG…YIWV, and LCWM…PAYL.

Belongs to the complex I subunit 1 family.

It is found in the mitochondrion inner membrane. It carries out the reaction a ubiquinone + NADH + 5 H(+)(in) = a ubiquinol + NAD(+) + 4 H(+)(out). Its function is as follows. Core subunit of the mitochondrial membrane respiratory chain NADH dehydrogenase (Complex I) that is believed to belong to the minimal assembly required for catalysis. Complex I functions in the transfer of electrons from NADH to the respiratory chain. The immediate electron acceptor for the enzyme is believed to be ubiquinone. This is NADH-ubiquinone oxidoreductase chain 1 (NAD1) from Candida albicans (strain SC5314 / ATCC MYA-2876) (Yeast).